The chain runs to 800 residues: Probable inorganic carbon transporter subunit DabA (800 aa).

The Zn(2+) site is built by Cys-329, Asp-331, His-488, and Cys-503.

Belongs to the inorganic carbon transporter (TC 9.A.2) DabA family. As to quaternary structure, forms a complex with DabB. The cofactor is Zn(2+).

It is found in the cell inner membrane. Functionally, part of an energy-coupled inorganic carbon pump. The sequence is that of Probable inorganic carbon transporter subunit DabA from Roseobacter denitrificans (strain ATCC 33942 / OCh 114) (Erythrobacter sp. (strain OCh 114)).